A 341-amino-acid chain; its full sequence is Methionine import ATP-binding protein MetN 1 (341 aa).

The ABC transporter domain maps to 2–241 (IEFRQVSKTF…PKTTIAQNFV (240 aa)). ATP is bound at residue 38–45 (GYSGAGKS).

The protein belongs to the ABC transporter superfamily. Methionine importer (TC 3.A.1.24) family. The complex is composed of two ATP-binding proteins (MetN), two transmembrane proteins (MetI) and a solute-binding protein (MetQ).

It is found in the cell membrane. It carries out the reaction L-methionine(out) + ATP + H2O = L-methionine(in) + ADP + phosphate + H(+). It catalyses the reaction D-methionine(out) + ATP + H2O = D-methionine(in) + ADP + phosphate + H(+). Its function is as follows. Part of the ABC transporter complex MetNIQ involved in methionine import. Responsible for energy coupling to the transport system. The polypeptide is Methionine import ATP-binding protein MetN 1 (Staphylococcus aureus (strain MW2)).